The primary structure comprises 186 residues: Adenine phosphoribosyltransferase (186 aa).

It belongs to the purine/pyrimidine phosphoribosyltransferase family. In terms of assembly, homodimer.

The protein localises to the cytoplasm. The enzyme catalyses AMP + diphosphate = 5-phospho-alpha-D-ribose 1-diphosphate + adenine. It functions in the pathway purine metabolism; AMP biosynthesis via salvage pathway; AMP from adenine: step 1/1. Functionally, catalyzes a salvage reaction resulting in the formation of AMP, that is energically less costly than de novo synthesis. The sequence is that of Adenine phosphoribosyltransferase from Sulfurovum sp. (strain NBC37-1).